The primary structure comprises 476 residues: Doublesex and mab-3 related transcription factor 3 (476 aa).

Positions 29–76 form a DNA-binding region, DM; sequence CARCRNHGVLSWLKGHKRYCRFKDCTCEKCILIIERQRVMAAQVALRR. 2 disordered regions span residues 89–130 and 147–195; these read DSLR…RPAT and GTLP…SKNC. Positions 102–121 are enriched in low complexity; sequence DAAATAATASQSSPASQASQ. Basic and acidic residues predominate over residues 176 to 185; it reads FSDKDTDQRS. Positions 255-290 constitute a DMA domain; that stretch reads RPPLEVLKKIFPNQKPTVLELILKGCGGDLVSAVEV. A compositionally biased stretch (polar residues) spans 418–432; that stretch reads NSTSVFRSSPVLSSR. Residues 418–476 form a disordered region; the sequence is NSTSVFRSSPVLSSRTTEDPRISIPDDGCPIVAKQSIYTEDDYDERSDSSDSRILNTSS.

It belongs to the DMRT family.

The protein localises to the nucleus. Functionally, probable transcription factor that plays a role in configuring the spinal circuits controlling stride in vertebrates. Involved in neuronal specification within a specific subdivision of spinal cord neurons and in the development of a coordinated locomotor network controlling limb movements. May regulate transcription during sexual development. The polypeptide is Doublesex and mab-3 related transcription factor 3 (Dmrt3) (Rattus norvegicus (Rat)).